A 202-amino-acid chain; its full sequence is Transmembrane 4 L6 family member 4 (202 aa).

Over 1-9 (MCTGGCARC) the chain is Cytoplasmic. A helical transmembrane segment spans residues 10–30 (LGGTLIPLAVFGLLANILLFF). The Extracellular portion of the chain corresponds to 31–48 (PGGKVVNDKSHLSDEVWY). The helical transmembrane segment at 49–69 (FGGILGSGVLMIFPALVFLGL) threads the bilayer. Residues 70–93 (QNNDCCGCCGNEGCGKRFAMFTST) are Cytoplasmic-facing. The helical transmembrane segment at 94–114 (LFAVIGFLGAGYSFIVSAVSI) threads the bilayer. Topologically, residues 115–158 (NKGPKCFMANGTWGYPFHDGDYLKDQALWSECEEPRDVVPWNLT) are extracellular. A glycan (N-linked (GlcNAc...) asparagine) is linked at N156. The chain crosses the membrane as a helical span at residues 159–179 (LFSILLVIGGIQMVLCAIQVI). Over 180–202 (NGLLGTLCGDCQCCGCCGGDGPV) the chain is Cytoplasmic.

Belongs to the L6 tetraspanin family.

Its subcellular location is the membrane. Functionally, regulates the adhesive and proliferative status of intestinal epithelial cells. Can mediate density-dependent cell proliferation. This Mus musculus (Mouse) protein is Transmembrane 4 L6 family member 4 (Tm4sf4).